A 184-amino-acid polypeptide reads, in one-letter code: NADH-quinone oxidoreductase subunit B (184 aa).

Cys37, Cys38, Cys103, and Cys132 together coordinate [4Fe-4S] cluster.

Belongs to the complex I 20 kDa subunit family. In terms of assembly, NDH-1 is composed of 14 different subunits. Subunits NuoB, C, D, E, F, and G constitute the peripheral sector of the complex. The cofactor is [4Fe-4S] cluster.

It localises to the cell membrane. The enzyme catalyses a quinone + NADH + 5 H(+)(in) = a quinol + NAD(+) + 4 H(+)(out). In terms of biological role, NDH-1 shuttles electrons from NADH, via FMN and iron-sulfur (Fe-S) centers, to quinones in the respiratory chain. The immediate electron acceptor for the enzyme in this species is believed to be a menaquinone. Couples the redox reaction to proton translocation (for every two electrons transferred, four hydrogen ions are translocated across the cytoplasmic membrane), and thus conserves the redox energy in a proton gradient. This Rhodococcus opacus (strain B4) protein is NADH-quinone oxidoreductase subunit B.